The chain runs to 58 residues: Mesomartoxin (58 aa).

Residues 1–29 (MMSRLSVFILIALVLSVIIDVLNNSKVEG) form the signal peptide. 3 disulfide bridges follow: Cys-31–Cys-49, Cys-35–Cys-54, and Cys-39–Cys-56.

This sequence belongs to the short scorpion toxin superfamily. Potassium channel inhibitor family. Alpha-KTx 26 subfamily. As to expression, expressed by the venom gland.

Its subcellular location is the secreted. Functionally, recombinant toxin that reversibly blocks the voltage-gated potassium channels Shaker (IC(50)=0.054 nM), rKv1.2/KCNA2 (IC(50)=15.6 nM), and rKv1.3/KCNA3 (IC(50)=12.5 uM). The polypeptide is Mesomartoxin (Olivierus martensii (Manchurian scorpion)).